The chain runs to 426 residues: Cytochrome c biogenesis protein Ccs1 (426 aa).

The next 3 membrane-spanning stretches (helical) occupy residues 11-31 (LKFA…GSII), 70-90 (NFWF…CTFF), and 153-173 (IAPV…IFAS).

The protein belongs to the Ccs1/CcsB family. May interact with CcsA.

It is found in the plastid. The protein resides in the chloroplast thylakoid membrane. Functionally, required during biogenesis of c-type cytochromes (cytochrome c6 and cytochrome f) at the step of heme attachment. This Heterosigma akashiwo (strain CCMP452 / OLISTH) protein is Cytochrome c biogenesis protein Ccs1.